Consider the following 327-residue polypeptide: Interleukin-12 subunit beta (327 aa).

An N-terminal signal peptide occupies residues Met1–Ala22. In terms of domain architecture, Ig-like C2-type spans Met23–Lys106. A disulfide bridge links Cys50 with Cys90. Residue Asn223 is glycosylated (N-linked (GlcNAc...) asparagine). Positions Pro238–Ser327 constitute a Fibronectin type-III domain.

This sequence belongs to the IL-12B family. As to quaternary structure, heterodimer with IL12A; disulfide-linked. The heterodimer is known as interleukin IL-12. Heterodimer with IL23A; disulfide-linked. The heterodimer is known as interleukin IL-23. Also secreted as a monomer. Interacts with NBR1; this interaction promotes IL-12 secretion.

The protein resides in the secreted. Its function is as follows. Cytokine that can act as a growth factor for activated T and NK cells, enhance the lytic activity of NK/lymphokine-activated killer cells, and stimulate the production of IFN-gamma by resting PBMC. Functionally, associates with IL23A to form the IL-23 interleukin, a heterodimeric cytokine which functions in innate and adaptive immunity. IL-23 may constitute with IL-17 an acute response to infection in peripheral tissues. IL-23 binds to a heterodimeric receptor complex composed of IL12RB1 and IL23R, activates the Jak-Stat signaling cascade, stimulates memory rather than naive T-cells and promotes production of pro-inflammatory cytokines. IL-23 induces autoimmune inflammation and thus may be responsible for autoimmune inflammatory diseases and may be important for tumorigenesis. The protein is Interleukin-12 subunit beta (IL12B) of Bos taurus (Bovine).